A 98-amino-acid polypeptide reads, in one-letter code: Integration host factor subunit alpha (98 aa).

The segment at 49 to 71 (FGNFDLRDKNQRPGRNPKTGEDI) is disordered.

This sequence belongs to the bacterial histone-like protein family. As to quaternary structure, heterodimer of an alpha and a beta chain.

In terms of biological role, this protein is one of the two subunits of integration host factor, a specific DNA-binding protein that functions in genetic recombination as well as in transcriptional and translational control. The sequence is that of Integration host factor subunit alpha from Shewanella amazonensis (strain ATCC BAA-1098 / SB2B).